Reading from the N-terminus, the 879-residue chain is Alanine--tRNA ligase (879 aa).

Zn(2+) contacts are provided by His-566, His-570, Cys-668, and His-672.

The protein belongs to the class-II aminoacyl-tRNA synthetase family. Requires Zn(2+) as cofactor.

It localises to the cytoplasm. It carries out the reaction tRNA(Ala) + L-alanine + ATP = L-alanyl-tRNA(Ala) + AMP + diphosphate. Functionally, catalyzes the attachment of alanine to tRNA(Ala) in a two-step reaction: alanine is first activated by ATP to form Ala-AMP and then transferred to the acceptor end of tRNA(Ala). Also edits incorrectly charged Ser-tRNA(Ala) and Gly-tRNA(Ala) via its editing domain. The sequence is that of Alanine--tRNA ligase from Clostridium perfringens (strain ATCC 13124 / DSM 756 / JCM 1290 / NCIMB 6125 / NCTC 8237 / Type A).